The following is a 343-amino-acid chain: ABC transporter riboflavin-binding protein RfuA (343 aa).

The first 19 residues, 1 to 19 (MNGAVCVLSALIAVFTCFS), serve as a signal peptide directing secretion. Cysteine 20 carries the N-palmitoyl cysteine lipid modification. Cysteine 20 carries the S-diacylglycerol cysteine lipid modification. Residues 43 to 46 (SPVY), aspartate 124, glutamine 140, tyrosine 176, tryptophan 208, and aspartate 255 contribute to the riboflavin site.

It belongs to the BMP lipoprotein family. As to quaternary structure, monomer in solution. The complex is probably composed of two ATP-binding proteins (RfuB), two transmembrane proteins (RfuC and RfuD) and a solute-binding protein (RfuA).

The protein resides in the cell inner membrane. Probably part of the ABC transporter complex RfuABCD involved in riboflavin import. Binds riboflavin. The chain is ABC transporter riboflavin-binding protein RfuA from Treponema pallidum (strain Nichols).